A 74-amino-acid polypeptide reads, in one-letter code: ATP synthase subunit c (74 aa).

2 consecutive transmembrane segments (helical) span residues 8–28 and 52–72; these read FIGVGLMAIGMYGAALGVSNI and IGAGLAEAIGLFSFVIAMLLI.

The protein belongs to the ATPase C chain family. F-type ATPases have 2 components, F(1) - the catalytic core - and F(0) - the membrane proton channel. F(1) has five subunits: alpha(3), beta(3), gamma(1), delta(1), epsilon(1). F(0) has three main subunits: a(1), b(2) and c(10-14). The alpha and beta chains form an alternating ring which encloses part of the gamma chain. F(1) is attached to F(0) by a central stalk formed by the gamma and epsilon chains, while a peripheral stalk is formed by the delta and b chains.

It is found in the cell inner membrane. In terms of biological role, f(1)F(0) ATP synthase produces ATP from ADP in the presence of a proton or sodium gradient. F-type ATPases consist of two structural domains, F(1) containing the extramembraneous catalytic core and F(0) containing the membrane proton channel, linked together by a central stalk and a peripheral stalk. During catalysis, ATP synthesis in the catalytic domain of F(1) is coupled via a rotary mechanism of the central stalk subunits to proton translocation. Its function is as follows. Key component of the F(0) channel; it plays a direct role in translocation across the membrane. A homomeric c-ring of between 10-14 subunits forms the central stalk rotor element with the F(1) delta and epsilon subunits. This chain is ATP synthase subunit c, found in Rickettsia canadensis (strain McKiel).